A 393-amino-acid chain; its full sequence is Probable RNA methyltransferase sce3898 (393 aa).

Glutamate 82 (proton acceptor) is an active-site residue. Residues 90-329 enclose the Radical SAM core domain; the sequence is RPGRYSACVS…VRSARLDAFR (240 aa). Cysteines 97 and 353 form a disulfide. Residues cysteine 104, cysteine 108, and cysteine 111 each contribute to the [4Fe-4S] cluster site. S-adenosyl-L-methionine-binding positions include 157 to 158, 212 to 214, and asparagine 294; these read GE and SLG. The S-methylcysteine intermediate role is filled by cysteine 353. Positions 357–393 are disordered; the sequence is ARPSAEAQRPGGRRAPPRPGATAGAADVGPSAPPRPA. The segment covering 373–382 has biased composition (low complexity); the sequence is PRPGATAGAA.

Belongs to the radical SAM superfamily. RlmN family. Requires [4Fe-4S] cluster as cofactor.

It is found in the cytoplasm. The polypeptide is Probable RNA methyltransferase sce3898 (Sorangium cellulosum (strain So ce56) (Polyangium cellulosum (strain So ce56))).